The following is a 305-amino-acid chain: Methionyl-tRNA formyltransferase (305 aa).

(6S)-5,6,7,8-tetrahydrofolate is bound at residue 110–113; that stretch reads SLLP.

Belongs to the Fmt family.

The enzyme catalyses L-methionyl-tRNA(fMet) + (6R)-10-formyltetrahydrofolate = N-formyl-L-methionyl-tRNA(fMet) + (6S)-5,6,7,8-tetrahydrofolate + H(+). Attaches a formyl group to the free amino group of methionyl-tRNA(fMet). The formyl group appears to play a dual role in the initiator identity of N-formylmethionyl-tRNA by promoting its recognition by IF2 and preventing the misappropriation of this tRNA by the elongation apparatus. This chain is Methionyl-tRNA formyltransferase, found in Ureaplasma urealyticum serovar 10 (strain ATCC 33699 / Western).